A 542-amino-acid chain; its full sequence is TNF receptor-associated factor 6 (542 aa).

An interaction with TAX1BP1 region spans residues 1-374; it reads MSLLHCENSC…EAQQCNGIYI (374 aa). The RING-type; degenerate zinc-finger motif lies at 71–110; sequence CPICLMALREAVQTPCGHRFCKACIIKSIRDAGHKCPVDN. Lys-125 participates in a covalent cross-link: Glycyl lysine isopeptide (Lys-Gly) (interchain with G-Cter in SUMO); alternate. Lys-125 is covalently cross-linked (Glycyl lysine isopeptide (Lys-Gly) (interchain with G-Cter in ubiquitin); alternate). Lys-143 is covalently cross-linked (Glycyl lysine isopeptide (Lys-Gly) (interchain with G-Cter in SUMO)). TRAF-type zinc fingers lie at residues 151-203 and 204-260; these read EHQA…EDKE and IHEQ…NHLA. A coiled-coil region spans residues 310–368; it reads SEVHNFQETIQQLEGRLVRQDHQIRELTAKMETQSMYVNELKRTIRTLEDKVAEIEAQQ. A Glycyl lysine isopeptide (Lys-Gly) (interchain with G-Cter in ubiquitin) cross-link involves residue Lys-339. The MATH domain maps to 370–519; that stretch reads NGIYIWKIGN…DDTLLVRCEV (150 aa). The interaction with TANK stretch occupies residues 375 to 542; it reads WKIGNFGMHL…FQPRSTDSGI (168 aa). Lys-473 is covalently cross-linked (Glycyl lysine isopeptide (Lys-Gly) (interchain with G-Cter in SUMO)).

Belongs to the TNF receptor-associated factor family. A subfamily. As to quaternary structure, homotrimer. Homooligomer. N-terminal region is dimeric while C-terminal region is trimeric; maybe providing a mode of oligomerization. Upon IL1B treatment, forms a complex with PELI1, IRAK1, IRAK4 and MYD88; this complex recruits MAP3K7/TAK1, TAB1 and TAB2 to mediate NF-kappa-B activation. Direct binding of SMAD6 to PELI1 prevents the complex formation and hence negatively regulates IL1R-TLR signaling and eventually NF-kappa-B-mediated gene expression. Binds to TNFRSF5/CD40 and TNFRSF11A/RANK. Associates with NGFR, TNFRSF17, IRAK2, IRAK3, RIPK2, MAP3K1, MAP3K5, MAP3K14, CSK, TRAF, TRAF-interacting protein TRIP and TNF receptor associated protein TDP2. Interacts with IL17R. Interacts with SQSTM1 bridging NTRK1 and NGFR. Forms a ternary complex with SQSTM1 and PRKCZ. Interacts with PELI2 and PELI3. Binds UBE2V1. Interacts with TAX1BP1; this interaction mediates deubiquitination of TRAF6 and inhibition of NF-kappa-B activation. Interacts with ZNF675. Interacts with ARRB1 and ARRB2. Interacts with MAP3K7 and TAB1/MAP3K7IP1; during IL-1 signaling. Interacts with UBE2N. Interacts with TGFBR1, HDAC1 and RANGAP1. Interacts with AKT1, AKT2 and AKT3. Interacts (via TRAF domains) with NUMBL (via C-terminal). Interacts with RBCK1. Interacts with LIMD1 (via LIM domains). Interacts with RSAD2/viperin. Interacts (via C-terminus) with EIF2AK2/PKR (via the kinase catalytic domain). Interacts with ZFAND5. Interacts with IL1RL1. Interacts with TRAFD1. Interacts with AJUBA. Interacts with MAVS/IPS1. Interacts (via TRAF domains) with DYNC2I2 (via WD domains). Interacts with IFIT3 (via N-terminus). Interacts with TICAM2. Interacts with CARD14. Interacts with CD40 and MAP3K8; the interaction is required for ERK activation. Interacts with TICAM1 and this interaction is enhanced in the presence of WDFY1. Interacts with TANK; this interaction increases in response to DNA damage. Interacts with USP10; this interaction increases in response to DNA damage. Interacts with ZC3H12A; this interaction increases in response to DNA damage and is stimulated by TANK. Interacts with WDFY3. Interacts with TRIM13. Interacts with GPS2. Interacts (via C-terminus) with SASH1. Interacts with LRRC19. Interacts with IL17RA and TRAF3IP2. Interacts with TOMM70. Interacts with AMBRA1; interaction is required to mediate 'Lys-63'-linked ubiquitination of ULK1. Interacts with CRBN; this interaction inhibits TLR4-mediated signaling by preventing TRAF6-mediated ubiquitination of ECSIT. In terms of processing, sumoylated on Lys-125, Lys-143 and Lys-473 with SUMO1. Post-translationally, polyubiquitinated on Lys-125 by TRAF3IP2; after cell stimulation with IL17A. Polyubiquitinated on Lys-125; after cell stimulation with IL1B or TGFB. This ligand-induced cell stimulation leads to dimerization/oligomerization of TRAF6 molecules, followed by auto-ubiquitination which involves UBE2N and UBE2V1 and leads to TRAF6 activation. This 'Lys-63' site-specific poly-ubiquitination appears to be associated with the activation of signaling molecules. Endogenous autoubiquitination occurs only for the cytoplasmic form. Deubiquitinated by USP10 in a TANK-dependent manner, leading to the negative regulation of NF-kappa-B signaling upon DNA damage. LRRC19 induces 'Lys-63' ubiquitination. Ubiquitinated at Lys-339 by the SCF(FBXL2) complex, leading to its degradation by the proteasome.

Its subcellular location is the cytoplasm. The protein resides in the cell cortex. The protein localises to the nucleus. It localises to the lipid droplet. It carries out the reaction S-ubiquitinyl-[E2 ubiquitin-conjugating enzyme]-L-cysteine + [acceptor protein]-L-lysine = [E2 ubiquitin-conjugating enzyme]-L-cysteine + N(6)-ubiquitinyl-[acceptor protein]-L-lysine.. It participates in protein modification; protein ubiquitination. Functionally, E3 ubiquitin ligase that, together with UBE2N and UBE2V1, mediates the synthesis of 'Lys-63'-linked-polyubiquitin chains conjugated to proteins, such as ECSIT, IKBKG, IRAK1, AKT1 and AKT2. Also mediates ubiquitination of free/unanchored polyubiquitin chain that leads to MAP3K7 activation. Leads to the activation of NF-kappa-B and JUN. Seems to also play a role in dendritic cells (DCs) maturation and/or activation. Represses c-Myb-mediated transactivation, in B-lymphocytes. Adapter protein that seems to play a role in signal transduction initiated via TNF receptor, IL-1 receptor and IL-17 receptor. Regulates osteoclast differentiation by mediating the activation of adapter protein complex 1 (AP-1) and NF-kappa-B, in response to RANK-L stimulation. Together with MAP3K8, mediates CD40 signals that activate ERK in B-cells and macrophages, and thus may play a role in the regulation of immunoglobulin production. Acts as a regulator of the JNK and NF-kappa-B signaling pathways by initiating assembly of heterotypic 'Lys-63'-/'Lys-48'-linked branched ubiquitin chains that are then recognized by TAB2: TRAF6 catalyzes initial 'Lys-63'-linked-polyubiquitin chains that are then branched via 'Lys-48'-linked polyubiquitin by HUWE1. 'Lys-63'-/'Lys-48'-linked branched ubiquitin chains protect 'Lys-63'-linkages from CYLD deubiquitination. Also participates in the TCR signaling by ubiquitinating LAT. The polypeptide is TNF receptor-associated factor 6 (TRAF6) (Bos taurus (Bovine)).